A 258-amino-acid polypeptide reads, in one-letter code: Arylamine N-acetyltransferase 1 (258 aa).

Residue Cys59 is the Acyl-thioester intermediate of the active site. Ile97–His98 contacts substrate. Active-site residues include His98 and Asp113. CoA contacts are provided by Tyr199 and Thr205.

The protein belongs to the arylamine N-acetyltransferase family.

It is found in the cytoplasm. It catalyses the reaction an arylamine + acetyl-CoA = an N-acetylarylamine + CoA. Its function is as follows. Participates in the detoxification of a plethora of hydrazine and arylamine drugs. This Felis catus (Cat) protein is Arylamine N-acetyltransferase 1 (NAT1).